Reading from the N-terminus, the 483-residue chain is Probable cytosol aminopeptidase (483 aa).

Positions 252 and 257 each coordinate Mn(2+). Lys264 is an active-site residue. Positions 275, 334, and 336 each coordinate Mn(2+). The active site involves Arg338.

The protein belongs to the peptidase M17 family. The cofactor is Mn(2+).

It localises to the cytoplasm. The catalysed reaction is Release of an N-terminal amino acid, Xaa-|-Yaa-, in which Xaa is preferably Leu, but may be other amino acids including Pro although not Arg or Lys, and Yaa may be Pro. Amino acid amides and methyl esters are also readily hydrolyzed, but rates on arylamides are exceedingly low.. The enzyme catalyses Release of an N-terminal amino acid, preferentially leucine, but not glutamic or aspartic acids.. Presumably involved in the processing and regular turnover of intracellular proteins. Catalyzes the removal of unsubstituted N-terminal amino acids from various peptides. The protein is Probable cytosol aminopeptidase of Legionella pneumophila (strain Paris).